The sequence spans 491 residues: CRM-domain containing factor CFM9, mitochondrial (491 aa).

The N-terminal 25 residues, M1 to E25, are a transit peptide targeting the mitochondrion. Positions M1 to K34 are disordered. The span at S22–K34 shows a compositional bias: basic and acidic residues. The CRM domain occupies E90–I187. Residues P255 to E265 show a composition bias toward basic and acidic residues. 2 disordered regions span residues P255–E287 and R328–D491. Residues E277–E287 show a composition bias toward acidic residues. A compositionally biased stretch (basic and acidic residues) spans R345 to D359. The segment covering S360–E375 has biased composition (acidic residues). Over residues R392 to D416 the composition is skewed to basic and acidic residues. The segment covering T453 to S478 has biased composition (polar residues).

As to expression, highly expressed in roots and meristemic regions of young seedlings. Expressed at low levels in stems, trichomes and stigma.

Its subcellular location is the mitochondrion. Involved in the splicing of group II introns in mitochondria. Required for the splicing of mitochondrial introns found in nad1, nad2, nad4, nad5, nad7, rps3 and cox2 genes. Splicing of mitochondrial introns is crucial for mitochondrial biogenesis and function, plant growth and development, and plant response to abiotic stresses. The polypeptide is CRM-domain containing factor CFM9, mitochondrial (Arabidopsis thaliana (Mouse-ear cress)).